A 255-amino-acid chain; its full sequence is Homeobox protein Hox-D4 (255 aa).

The segment at 31–127 is disordered; it reads EQGADYYGGG…PKQPPSGTAL (97 aa). Positions 94–107 are enriched in pro residues; the sequence is EPCPAPPAPPPAPL. An Antp-type hexapeptide motif is present at residues 133–138; sequence VYPWMK. Residues 154-213 constitute a DNA-binding region (homeobox); sequence PKRSRTAYTRQQVLELEKEFHFNRYLTRRRRIEIAHTLCLSERQIKIWFQNRRMKWKKDH. The tract at residues 212 to 255 is disordered; sequence DHKLPNTKGRSSSSSSSSSCSSSVAPSQHLQPMAKDHHTDLTTL. Over residues 222-234 the composition is skewed to low complexity; sequence SSSSSSSSSCSSS. Residues 245–255 are compositionally biased toward basic and acidic residues; sequence AKDHHTDLTTL.

The protein belongs to the Antp homeobox family. Deformed subfamily. Forms a DNA-binding heterodimer with transcription factor PBX1.

Its subcellular location is the nucleus. Sequence-specific transcription factor which is part of a developmental regulatory system that provides cells with specific positional identities on the anterior-posterior axis. This chain is Homeobox protein Hox-D4 (HOXD4), found in Homo sapiens (Human).